A 334-amino-acid polypeptide reads, in one-letter code: Glyceraldehyde-3-phosphate dehydrogenase (334 aa).

NAD(+) is bound by residues 10–11, D33, K77, and T119; that span reads RI. D-glyceraldehyde 3-phosphate-binding positions include 149 to 151, T180, 209 to 210, and R232; these read SCT and TG. The active-site Nucleophile is the C150. Residue N314 participates in NAD(+) binding.

It belongs to the glyceraldehyde-3-phosphate dehydrogenase family. Homotetramer.

Its subcellular location is the cytoplasm. It catalyses the reaction D-glyceraldehyde 3-phosphate + phosphate + NAD(+) = (2R)-3-phospho-glyceroyl phosphate + NADH + H(+). It participates in carbohydrate degradation; glycolysis; pyruvate from D-glyceraldehyde 3-phosphate: step 1/5. In terms of biological role, catalyzes the oxidative phosphorylation of glyceraldehyde 3-phosphate (G3P) to 1,3-bisphosphoglycerate (BPG) using the cofactor NAD. The first reaction step involves the formation of a hemiacetal intermediate between G3P and a cysteine residue, and this hemiacetal intermediate is then oxidized to a thioester, with concomitant reduction of NAD to NADH. The reduced NADH is then exchanged with the second NAD, and the thioester is attacked by a nucleophilic inorganic phosphate to produce BPG. This chain is Glyceraldehyde-3-phosphate dehydrogenase (gap), found in Chlamydia trachomatis serovar D (strain ATCC VR-885 / DSM 19411 / UW-3/Cx).